Consider the following 278-residue polypeptide: Undecaprenyl-diphosphatase (278 aa).

8 helical membrane passes run 3–23, 42–62, 88–108, 112–132, 152–172, 190–210, 225–245, and 253–273; these read YILIGVILGIVQGISEWIPIS, VAYSFGLFMEIGTIAAAIIYF, FLVIVTIITGLMGVPLYLFVI, ILGLPMTVLGVVLLIDGIIIY, IIIVGIAQGLAALPGVSRSGI, LSFISLIPAALGAIGVTVLFS, GLLISIVVATFVSIFFINALL, and VVVLVIILGIIAIISGILSGI.

The protein belongs to the UppP family.

The protein localises to the cell membrane. It carries out the reaction di-trans,octa-cis-undecaprenyl diphosphate + H2O = di-trans,octa-cis-undecaprenyl phosphate + phosphate + H(+). Catalyzes the dephosphorylation of undecaprenyl diphosphate (UPP). The chain is Undecaprenyl-diphosphatase from Saccharolobus islandicus (strain M.16.4 / Kamchatka #3) (Sulfolobus islandicus).